Reading from the N-terminus, the 412-residue chain is 1-deoxy-D-xylulose 5-phosphate reductoisomerase (412 aa).

Residues Thr-5, Gly-6, Ser-7, Ile-8, Gly-31, Arg-32, Asn-33, and Asn-125 each coordinate NADPH. 1-deoxy-D-xylulose 5-phosphate is bound at residue Lys-126. An NADPH-binding site is contributed by Glu-127. Mn(2+) is bound at residue Asp-151. Residues Ser-152, Glu-153, Ser-189, and His-212 each contribute to the 1-deoxy-D-xylulose 5-phosphate site. Glu-153 is a Mn(2+) binding site. Gly-218 contacts NADPH. 4 residues coordinate 1-deoxy-D-xylulose 5-phosphate: Ser-225, Asn-230, Lys-231, and Glu-234. Glu-234 contributes to the Mn(2+) binding site.

The protein belongs to the DXR family. Requires Mg(2+) as cofactor. The cofactor is Mn(2+).

It carries out the reaction 2-C-methyl-D-erythritol 4-phosphate + NADP(+) = 1-deoxy-D-xylulose 5-phosphate + NADPH + H(+). It functions in the pathway isoprenoid biosynthesis; isopentenyl diphosphate biosynthesis via DXP pathway; isopentenyl diphosphate from 1-deoxy-D-xylulose 5-phosphate: step 1/6. In terms of biological role, catalyzes the NADPH-dependent rearrangement and reduction of 1-deoxy-D-xylulose-5-phosphate (DXP) to 2-C-methyl-D-erythritol 4-phosphate (MEP). The polypeptide is 1-deoxy-D-xylulose 5-phosphate reductoisomerase (Prochlorococcus marinus (strain SARG / CCMP1375 / SS120)).